The following is a 266-amino-acid chain: Dihydropteroate synthase (266 aa).

One can recognise a Pterin-binding domain in the interval 12–260; sequence AAIMGILNVT…DVKANQDIVA (249 aa). Residue asparagine 19 participates in Mg(2+) binding. (7,8-dihydropterin-6-yl)methyl diphosphate is bound by residues threonine 59, aspartate 93, asparagine 112, aspartate 176, lysine 212, and 248-250; that span reads RVH.

The protein belongs to the DHPS family. In terms of assembly, homodimer or homotrimer. The cofactor is Mg(2+).

It catalyses the reaction (7,8-dihydropterin-6-yl)methyl diphosphate + 4-aminobenzoate = 7,8-dihydropteroate + diphosphate. It functions in the pathway cofactor biosynthesis; tetrahydrofolate biosynthesis; 7,8-dihydrofolate from 2-amino-4-hydroxy-6-hydroxymethyl-7,8-dihydropteridine diphosphate and 4-aminobenzoate: step 1/2. Functionally, catalyzes the condensation of para-aminobenzoate (pABA) with 6-hydroxymethyl-7,8-dihydropterin diphosphate (DHPt-PP) to form 7,8-dihydropteroate (H2Pte), the immediate precursor of folate derivatives. This is Dihydropteroate synthase (folP) from Streptococcus pyogenes serotype M18 (strain MGAS8232).